The chain runs to 642 residues: Threonine--tRNA ligase (642 aa).

The 61-residue stretch at 1–61 folds into the TGS domain; that stretch reads MPVITLPDGS…ETDAELSIIT (61 aa). Positions 243–534 are catalytic; that stretch reads DHRKIGKQLD…LIEEYAGRFP (292 aa). Zn(2+) is bound by residues cysteine 334, histidine 385, and histidine 511.

Belongs to the class-II aminoacyl-tRNA synthetase family. In terms of assembly, homodimer. It depends on Zn(2+) as a cofactor.

It localises to the cytoplasm. It catalyses the reaction tRNA(Thr) + L-threonine + ATP = L-threonyl-tRNA(Thr) + AMP + diphosphate + H(+). Functionally, catalyzes the attachment of threonine to tRNA(Thr) in a two-step reaction: L-threonine is first activated by ATP to form Thr-AMP and then transferred to the acceptor end of tRNA(Thr). Also edits incorrectly charged L-seryl-tRNA(Thr). This chain is Threonine--tRNA ligase, found in Shewanella sp. (strain ANA-3).